The primary structure comprises 434 residues: Fez family zinc finger protein 2 (434 aa).

The Engrailed homology 1 repressor motif lies at 27-42; that stretch reads SLAFSIERIMAKTSEP. C2H2-type zinc fingers lie at residues 253-275, 281-303, 309-331, 337-359, 365-387, and 393-416; these read FTCE…MPVH, FVCK…KIIH, HKCN…IRIH, FVCE…KLTH, YKCS…MHTH, and FTCA…RKLH.

Belongs to the krueppel C2H2-type zinc-finger protein family.

It is found in the nucleus. Its function is as follows. Transcription repressor. Component of the regulatory cascade that controls the development of dopaminergic (DA) and serotonergic (5HT) neurons. The polypeptide is Fez family zinc finger protein 2 (fezf2) (Xenopus laevis (African clawed frog)).